The following is a 123-amino-acid chain: Ribosome-binding factor A (123 aa).

This sequence belongs to the RbfA family. In terms of assembly, monomer. Binds 30S ribosomal subunits, but not 50S ribosomal subunits or 70S ribosomes.

The protein resides in the cytoplasm. Its function is as follows. One of several proteins that assist in the late maturation steps of the functional core of the 30S ribosomal subunit. Associates with free 30S ribosomal subunits (but not with 30S subunits that are part of 70S ribosomes or polysomes). Required for efficient processing of 16S rRNA. May interact with the 5'-terminal helix region of 16S rRNA. This Cupriavidus metallidurans (strain ATCC 43123 / DSM 2839 / NBRC 102507 / CH34) (Ralstonia metallidurans) protein is Ribosome-binding factor A.